Reading from the N-terminus, the 211-residue chain is Putative truncated flagellar export/assembly protein LafU (211 aa).

The OmpA-like domain maps to 58–176 (LRVLIKDDQN…RIEIMVLTKS (119 aa)).

The protein belongs to the MotB family.

In Escherichia coli (strain K12), this protein is Putative truncated flagellar export/assembly protein LafU.